The following is a 204-amino-acid chain: MNTQPLRVGIGGPVGSGKTALTLALCQALRDRYNLAVVTNDIYTQEDAQFLVRNEALAPERIIGVETGGCPHTAIREDASINLEAVEQLNRRFPGLDLIIVESGGDNLSATFSPELSDLTIYVIDVSAGDKLPRKGGPGICKSDLLVINKIDLAPMVGASLEVMDRDARKMRGERPFVFSNQKVGQGLEEIISFIEKQGMLSAA.

12-19 lines the GTP pocket; sequence GPVGSGKT.

This sequence belongs to the SIMIBI class G3E GTPase family. UreG subfamily. As to quaternary structure, homodimer. UreD, UreF and UreG form a complex that acts as a GTP-hydrolysis-dependent molecular chaperone, activating the urease apoprotein by helping to assemble the nickel containing metallocenter of UreC. The UreE protein probably delivers the nickel.

The protein resides in the cytoplasm. In terms of biological role, facilitates the functional incorporation of the urease nickel metallocenter. This process requires GTP hydrolysis, probably effectuated by UreG. This is Urease accessory protein UreG from Stutzerimonas stutzeri (strain A1501) (Pseudomonas stutzeri).